Consider the following 457-residue polypeptide: tRNA-2-methylthio-N(6)-dimethylallyladenosine synthase (457 aa).

In terms of domain architecture, MTTase N-terminal spans 18–133; sequence KKLFIETYGC…LPELIASVEA (116 aa). The [4Fe-4S] cluster site is built by Cys27, Cys63, Cys97, Cys171, Cys175, and Cys178. The region spanning 157-390 is the Radical SAM core domain; that stretch reads CGNHISGFVS…IALQNRLSAE (234 aa). In terms of domain architecture, TRAM spans 393-456; it reads NRCIGKTYEV…SATLKGEEVF (64 aa).

It belongs to the methylthiotransferase family. MiaB subfamily. In terms of assembly, monomer. [4Fe-4S] cluster is required as a cofactor.

It localises to the cytoplasm. It catalyses the reaction N(6)-dimethylallyladenosine(37) in tRNA + (sulfur carrier)-SH + AH2 + 2 S-adenosyl-L-methionine = 2-methylsulfanyl-N(6)-dimethylallyladenosine(37) in tRNA + (sulfur carrier)-H + 5'-deoxyadenosine + L-methionine + A + S-adenosyl-L-homocysteine + 2 H(+). In terms of biological role, catalyzes the methylthiolation of N6-(dimethylallyl)adenosine (i(6)A), leading to the formation of 2-methylthio-N6-(dimethylallyl)adenosine (ms(2)i(6)A) at position 37 in tRNAs that read codons beginning with uridine. This chain is tRNA-2-methylthio-N(6)-dimethylallyladenosine synthase, found in Bacteroides fragilis (strain ATCC 25285 / DSM 2151 / CCUG 4856 / JCM 11019 / LMG 10263 / NCTC 9343 / Onslow / VPI 2553 / EN-2).